We begin with the raw amino-acid sequence, 472 residues long: Sporozoite surface protein P36p (472 aa).

An N-terminal signal peptide occupies residues 1–23 (MMKRRRIFMYYCFCFLLKYVAFS). Asn24, Asn29, Asn93, Asn112, and Asn185 each carry an N-linked (GlcNAc...) asparagine glycan. 6-Cys domains follow at residues 24–157 (NVTN…FKKM) and 160–299 (KIKG…TSKN). 5 cysteine pairs are disulfide-bonded: Cys64–Cys138, Cys81–Cys136, Cys164–Cys188, Cys202–Cys281, and Cys222–Cys279. N-linked (GlcNAc...) asparagine glycans are attached at residues Asn295, Asn306, Asn383, Asn396, Asn400, and Asn416. The segment at 359-385 (KMDPSDEDESNENAHNGNRANKDANYS) is disordered. The GPI-anchor amidated serine moiety is linked to residue Ser449. Positions 450–472 (SSYYEVFNYFSIAFILIIHMLLW) are cleaved as a propeptide — removed in mature form.

It localises to the cell surface. The protein localises to the cell membrane. Involved in sporozoite infection of hepatocytes and replication therein. The chain is Sporozoite surface protein P36p (P52) from Plasmodium berghei (strain Anka).